Consider the following 461-residue polypeptide: Glycine--tRNA ligase (461 aa).

Residues Arg-100 and Glu-163 each coordinate substrate. ATP-binding positions include 195–197, 205–210, 282–283, and 326–329; these read RNE, FRTREF, EL, and GLGR. A substrate-binding site is contributed by 210–214; sequence FEQME. A substrate-binding site is contributed by 322 to 326; that stretch reads EPAAG.

Belongs to the class-II aminoacyl-tRNA synthetase family. In terms of assembly, homodimer.

It localises to the cytoplasm. It carries out the reaction tRNA(Gly) + glycine + ATP = glycyl-tRNA(Gly) + AMP + diphosphate. Functionally, catalyzes the attachment of glycine to tRNA(Gly). This is Glycine--tRNA ligase from Corynebacterium efficiens (strain DSM 44549 / YS-314 / AJ 12310 / JCM 11189 / NBRC 100395).